A 185-amino-acid polypeptide reads, in one-letter code: ATP-dependent protease subunit HslV (185 aa).

Residue Thr12 is part of the active site. Residues Ala168, Cys171, and Thr174 each coordinate Na(+).

This sequence belongs to the peptidase T1B family. HslV subfamily. In terms of assembly, a double ring-shaped homohexamer of HslV is capped on each side by a ring-shaped HslU homohexamer. The assembly of the HslU/HslV complex is dependent on binding of ATP.

The protein localises to the cytoplasm. It carries out the reaction ATP-dependent cleavage of peptide bonds with broad specificity.. Allosterically activated by HslU binding. Its function is as follows. Protease subunit of a proteasome-like degradation complex believed to be a general protein degrading machinery. The sequence is that of ATP-dependent protease subunit HslV from Cereibacter sphaeroides (strain ATCC 17029 / ATH 2.4.9) (Rhodobacter sphaeroides).